Consider the following 281-residue polypeptide: NADPH-dependent 7-cyano-7-deazaguanine reductase (281 aa).

Residue 81–83 coordinates substrate; the sequence is IES. An NADPH-binding site is contributed by 83–84; sequence SK. Residue C188 is the Thioimide intermediate of the active site. Residue D195 is the Proton donor of the active site. Position 227 to 228 (227 to 228) interacts with substrate; it reads HE. Residue 256-257 coordinates NADPH; the sequence is RG.

This sequence belongs to the GTP cyclohydrolase I family. QueF type 2 subfamily. Homodimer.

It localises to the cytoplasm. The catalysed reaction is 7-aminomethyl-7-carbaguanine + 2 NADP(+) = 7-cyano-7-deazaguanine + 2 NADPH + 3 H(+). The protein operates within tRNA modification; tRNA-queuosine biosynthesis. Catalyzes the NADPH-dependent reduction of 7-cyano-7-deazaguanine (preQ0) to 7-aminomethyl-7-deazaguanine (preQ1). The polypeptide is NADPH-dependent 7-cyano-7-deazaguanine reductase (Polaromonas naphthalenivorans (strain CJ2)).